The chain runs to 134 residues: Small ribosomal subunit protein bS6 (134 aa).

Residues 113–122 show a composition bias toward basic and acidic residues; sequence NRDIKEKEQP. The interval 113 to 134 is disordered; sequence NRDIKEKEQPSESNVDADLKVN.

The protein belongs to the bacterial ribosomal protein bS6 family.

In terms of biological role, binds together with bS18 to 16S ribosomal RNA. The sequence is that of Small ribosomal subunit protein bS6 from Borrelia duttonii (strain Ly).